The primary structure comprises 445 residues: Ubiquitin carboxyl-terminal hydrolase MINDY-3 (445 aa).

C51 acts as the Nucleophile in catalysis. S125 carries the phosphoserine modification. H287 (proton acceptor) is an active-site residue.

Belongs to the MINDY deubiquitinase family. FAM188 subfamily. As to quaternary structure, interacts with COPS5. As to expression, widely expressed with high levels in heart, skeletal muscle, and kidney, and low levels in liver and brain. Also expressed in lung (at protein level).

It localises to the nucleus. The enzyme catalyses Thiol-dependent hydrolysis of ester, thioester, amide, peptide and isopeptide bonds formed by the C-terminal Gly of ubiquitin (a 76-residue protein attached to proteins as an intracellular targeting signal).. Functionally, hydrolase that can remove 'Lys-48'-linked conjugated ubiquitin from proteins. The chain is Ubiquitin carboxyl-terminal hydrolase MINDY-3 from Homo sapiens (Human).